A 798-amino-acid chain; its full sequence is Galactinol--sucrose galactosyltransferase (798 aa).

The protein belongs to the glycosyl hydrolases 36 family.

It carries out the reaction alpha-D-galactosyl-(1-&gt;3)-1D-myo-inositol + sucrose = raffinose + myo-inositol. Inhibited by 1-deoxygalactonojirimycin. Not inhibited by stachyose. Strong inhibition of the hydrolytic activity by sucrose. Functionally, transglycosidase operating by a ping-pong reaction mechanism. Involved in the synthesis of raffinose, a major soluble carbohydrate in seeds, roots and tubers. Able to utilize D-ononitol and D-pinitol as acceptors. May also act as a glycoside hydrolase. The protein is Galactinol--sucrose galactosyltransferase (RFS) of Pisum sativum (Garden pea).